A 313-amino-acid polypeptide reads, in one-letter code: MEKFKAVLDLQRKHRNALGYSLVTLLTAGGEKIFSSVVFQCPCTATWNLPYGLVFLLVPALALFLLGYALSARTWRLLTGCCSRSARFSSGLRSAFVCAQLSMTAAFAPLTWVAVALLEGSFYQCAVSGSARLAPYLCKGRDPNCNATLPQAPCNKQKVEMQEILSQLKAQSQVFGWILIAAVIILLLLVKSVTRCFSPVSYLQLKFWEIYWEKEKQILQNQAAENATQLAEENVRCFFECSKPKECNTPSSKDWQEISALYTFNPKNQFYSMLHKYVSREEMSGSVRSVEGDAVIPALGFVDDMSMTNTHEL.

Residues 1–21 (MEKFKAVLDLQRKHRNALGYS) are Cytoplasmic-facing. A helical membrane pass occupies residues 22 to 37 (LVTLLTAGGEKIFSSV). Over 38–46 (VFQCPCTAT) the chain is Extracellular. 3 disulfides stabilise this stretch: Cys-41–Cys-125, Cys-43–Cys-154, and Cys-138–Cys-145. A helical transmembrane segment spans residues 47 to 68 (WNLPYGLVFLLVPALALFLLGY). Residues 69 to 101 (ALSARTWRLLTGCCSRSARFSSGLRSAFVCAQL) are Cytoplasmic-facing. The helical transmembrane segment at 102–126 (SMTAAFAPLTWVAVALLEGSFYQCA) threads the bilayer. The Extracellular portion of the chain corresponds to 127–167 (VSGSARLAPYLCKGRDPNCNATLPQAPCNKQKVEMQEILSQ). Residues 168–190 (LKAQSQVFGWILIAAVIILLLLV) traverse the membrane as a helical segment. Residues 191 to 313 (KSVTRCFSPV…DMSMTNTHEL (123 aa)) lie on the Cytoplasmic side of the membrane.

The protein belongs to the CALHM family. Oligomerizes to form decameric and undecameric channels. N-glycosylated. In terms of tissue distribution, immune cells in primary and secondary lymphoid organs.

The protein resides in the cell membrane. The enzyme catalyses ATP(in) = ATP(out). Inhibited by Gd(3+). Partially inhibited by divalent ions Ca(2+) and Ba(2+). Functionally, pore-forming subunit of an ATP-permeable channel. In response to pathogen-derived and proinflammatory stimuli, relocates from intracellular compartments to NK-dendritic cell and NK-macrophage immune synapses where it mediates ATP efflux and NK cell activation involved in antimicrobial and antitumor responses. May assemble to form gap junction channel-like structures with gating and ion conductance likely regulated by membrane lipids and voltage rather than by extracellular calcium levels. The chain is Calcium homeostasis modulator protein 6 from Mus musculus (Mouse).